We begin with the raw amino-acid sequence, 86 residues long: Large ribosomal subunit protein uL23 (86 aa).

The protein belongs to the universal ribosomal protein uL23 family. In terms of assembly, part of the 50S ribosomal subunit. Contacts protein L29.

Binds to 23S rRNA. One of the proteins that surrounds the polypeptide exit tunnel on the outside of the ribosome. The sequence is that of Large ribosomal subunit protein uL23 from Methanobrevibacter smithii (strain ATCC 35061 / DSM 861 / OCM 144 / PS).